Reading from the N-terminus, the 89-residue chain is Elongation factor 1-beta (89 aa).

The protein belongs to the EF-1-beta/EF-1-delta family.

Its function is as follows. Promotes the exchange of GDP for GTP in EF-1-alpha/GDP, thus allowing the regeneration of EF-1-alpha/GTP that could then be used to form the ternary complex EF-1-alpha/GTP/AAtRNA. This is Elongation factor 1-beta (ef1b) from Methanocaldococcus jannaschii (strain ATCC 43067 / DSM 2661 / JAL-1 / JCM 10045 / NBRC 100440) (Methanococcus jannaschii).